The following is a 183-amino-acid chain: Putative 3-methyladenine DNA glycosylase (183 aa).

Belongs to the DNA glycosylase MPG family.

In Rickettsia rickettsii (strain Iowa), this protein is Putative 3-methyladenine DNA glycosylase.